We begin with the raw amino-acid sequence, 347 residues long: tRNA N6-adenosine threonylcarbamoyltransferase (347 aa).

Residues H111 and H115 each coordinate Fe cation. Substrate-binding positions include 133–137 (LASGG), D166, G179, and N278. D306 is a Fe cation binding site.

This sequence belongs to the KAE1 / TsaD family. The cofactor is Fe(2+).

Its subcellular location is the cytoplasm. It carries out the reaction L-threonylcarbamoyladenylate + adenosine(37) in tRNA = N(6)-L-threonylcarbamoyladenosine(37) in tRNA + AMP + H(+). Its function is as follows. Required for the formation of a threonylcarbamoyl group on adenosine at position 37 (t(6)A37) in tRNAs that read codons beginning with adenine. Is involved in the transfer of the threonylcarbamoyl moiety of threonylcarbamoyl-AMP (TC-AMP) to the N6 group of A37, together with TsaE and TsaB. TsaD likely plays a direct catalytic role in this reaction. The sequence is that of tRNA N6-adenosine threonylcarbamoyltransferase from Paramagnetospirillum magneticum (strain ATCC 700264 / AMB-1) (Magnetospirillum magneticum).